Here is a 382-residue protein sequence, read N- to C-terminus: Homoserine O-succinyltransferase (382 aa).

In terms of domain architecture, AB hydrolase-1 spans 51 to 359; it reads NAVLICHALS…DAPWGHDAFL (309 aa). Serine 157 acts as the Nucleophile in catalysis. Arginine 227 contributes to the substrate binding site. Residues aspartate 322 and histidine 355 contribute to the active site. Residue aspartate 356 participates in substrate binding.

It belongs to the AB hydrolase superfamily. MetX family. Homodimer.

It is found in the cytoplasm. The catalysed reaction is L-homoserine + succinyl-CoA = O-succinyl-L-homoserine + CoA. It participates in amino-acid biosynthesis; L-methionine biosynthesis via de novo pathway; O-succinyl-L-homoserine from L-homoserine: step 1/1. In terms of biological role, transfers a succinyl group from succinyl-CoA to L-homoserine, forming succinyl-L-homoserine. The protein is Homoserine O-succinyltransferase of Marinobacter nauticus (strain ATCC 700491 / DSM 11845 / VT8) (Marinobacter aquaeolei).